We begin with the raw amino-acid sequence, 824 residues long: U-box domain-containing protein 24 (824 aa).

In terms of domain architecture, U-box spans 13–92 (GAFEAFVCPL…HEWRARNEEK (80 aa)). ARM repeat units follow at residues 133–172 (AASK…VLVE), 175–214 (DDNK…ELSG), 217–258 (PTCE…NLDR), 260–299 (DANV…ELAL), 300–339 (ANDD…EISS), 341–385 (EASA…NLVA), 396–435 (DDDE…PAIG), 441–481 (VLAG…DIRV), and 486–525 (LLRN…EEQA).

Interacts with BZR1, BZR2, BZR3 and GSK2. In terms of processing, auto-ubiquitinated. Post-translationally, phosphorylated by GSK2. Phosphorylation of PUB24 increases its cellular stability.

It localises to the cytoplasm. The protein localises to the cytosol. It is found in the nucleus. The catalysed reaction is S-ubiquitinyl-[E2 ubiquitin-conjugating enzyme]-L-cysteine + [acceptor protein]-L-lysine = [E2 ubiquitin-conjugating enzyme]-L-cysteine + N(6)-ubiquitinyl-[acceptor protein]-L-lysine.. It functions in the pathway protein modification; protein ubiquitination. E3 ubiquitin-protein ligase that functions as a negative regulator of brassinosteroid (BR) signaling. Targets BZR1, a positive regulator of BR signaling pathway, and promotes its degradation via the ubiquitin-26S proteasome pathway. This chain is U-box domain-containing protein 24, found in Oryza sativa subsp. japonica (Rice).